Here is a 524-residue protein sequence, read N- to C-terminus: Apoptosis inhibitor 5 (524 aa).

Residues 2–360 are ARM-like and Heat-like helical repeats; sequence PTVEELYRNY…HQLGRKLPDF (359 aa). N6-acetyllysine is present on K251. The tract at residues 370–391 is leucine-zipper; sequence LKDFKIRLQYFARGLQVYIRQL. T399 is modified (phosphothreonine). Residues 452–524 are disordered; sequence GQKRASEDTT…RGNRSRGRLY (73 aa). Positions 454-475 match the Nuclear localization signal motif; that stretch reads KRASEDTTSGSPPKKSSAGPKR. A phosphoserine mark is found at S462, S464, and S469. The span at 462 to 472 shows a compositional bias: low complexity; the sequence is SGSPPKKSSAG. The span at 487 to 497 shows a compositional bias: polar residues; that stretch reads KYSSNLGNFNY. At R500 the chain carries Omega-N-methylarginine.

This sequence belongs to the API5 family. Monomer. Interacts with FGF2 and ACIN1. Acetylation at Lys-251 impairs antiapoptotic function. As to expression, expressed in all tissues tested, including heart, brain, placenta, lung, liver, skeletal muscle, kidney and pancreas. Highest levels in heart, pancreas and placenta. Highly expressed in several cancers. Preferentially expressed in squamous cell carcinoma versus adenocarcinoma in non-small cell lung cancer.

The protein localises to the nucleus. Its subcellular location is the cytoplasm. Its function is as follows. Antiapoptotic factor that may have a role in protein assembly. Negatively regulates ACIN1. By binding to ACIN1, it suppresses ACIN1 cleavage from CASP3 and ACIN1-mediated DNA fragmentation. Also known to efficiently suppress E2F1-induced apoptosis. Its depletion enhances the cytotoxic action of the chemotherapeutic drugs. The sequence is that of Apoptosis inhibitor 5 from Homo sapiens (Human).